The sequence spans 351 residues: Protein RecA (351 aa).

68-75 (GPESSGKT) provides a ligand contact to ATP.

Belongs to the RecA family.

It is found in the cytoplasm. Functionally, can catalyze the hydrolysis of ATP in the presence of single-stranded DNA, the ATP-dependent uptake of single-stranded DNA by duplex DNA, and the ATP-dependent hybridization of homologous single-stranded DNAs. It interacts with LexA causing its activation and leading to its autocatalytic cleavage. The chain is Protein RecA from Chloroflexus aurantiacus (strain ATCC 29364 / DSM 637 / Y-400-fl).